The following is a 217-amino-acid chain: MQNTTLHIRHLGQQDYESVWHAMQHYTDTRNNDSPDELWIVEHPPVFTQGQAGKSEHILNPGDIPVIQVDRGGQVTYHGPGQLVVYPLLDIKRSKIGVRQLVTYIEQSIIDMLAKYTINAYAKADAPGVYVDERKVASLGLRIRKGCSFHGLALNVDMDLAPFRRINPCGYAGLEMVQCRELGGPQTVIEAGDQLIITLSQLLGYQHLVHHQGLAAS.

The region spanning 32–207 is the BPL/LPL catalytic domain; that stretch reads NDSPDELWIV…TLSQLLGYQH (176 aa). Residues 71-78, 138-140, and 151-153 each bind substrate; these read RGGQVTYH, SLG, and GLA. The Acyl-thioester intermediate role is filled by cysteine 169.

The protein belongs to the LipB family.

Its subcellular location is the cytoplasm. The catalysed reaction is octanoyl-[ACP] + L-lysyl-[protein] = N(6)-octanoyl-L-lysyl-[protein] + holo-[ACP] + H(+). Its pathway is protein modification; protein lipoylation via endogenous pathway; protein N(6)-(lipoyl)lysine from octanoyl-[acyl-carrier-protein]: step 1/2. Catalyzes the transfer of endogenously produced octanoic acid from octanoyl-acyl-carrier-protein onto the lipoyl domains of lipoate-dependent enzymes. Lipoyl-ACP can also act as a substrate although octanoyl-ACP is likely to be the physiological substrate. The sequence is that of Octanoyltransferase from Shewanella oneidensis (strain ATCC 700550 / JCM 31522 / CIP 106686 / LMG 19005 / NCIMB 14063 / MR-1).